A 476-amino-acid polypeptide reads, in one-letter code: tRNA(Ile)-lysidine synthase (476 aa).

Position 25–30 (25–30 (SGGPDS)) interacts with ATP.

The protein belongs to the tRNA(Ile)-lysidine synthase family.

The protein resides in the cytoplasm. It carries out the reaction cytidine(34) in tRNA(Ile2) + L-lysine + ATP = lysidine(34) in tRNA(Ile2) + AMP + diphosphate + H(+). In terms of biological role, ligates lysine onto the cytidine present at position 34 of the AUA codon-specific tRNA(Ile) that contains the anticodon CAU, in an ATP-dependent manner. Cytidine is converted to lysidine, thus changing the amino acid specificity of the tRNA from methionine to isoleucine. This chain is tRNA(Ile)-lysidine synthase, found in Bacillus licheniformis (strain ATCC 14580 / DSM 13 / JCM 2505 / CCUG 7422 / NBRC 12200 / NCIMB 9375 / NCTC 10341 / NRRL NRS-1264 / Gibson 46).